The following is a 164-amino-acid chain: Neurotrophin-3 (164 aa).

A signal peptide spans I1–S3. Positions T4 to R118 are excised as a propeptide. Positions L89–R126 are disordered. A glycan (N-linked (GlcNAc...) asparagine) is linked at N111.

The protein belongs to the NGF-beta family.

It is found in the secreted. Seems to promote the survival of visceral and proprioceptive sensory neurons. The protein is Neurotrophin-3 (NTF3) of Cylindrophis ruffus (Red-tailed pipe snake).